The sequence spans 100 residues: MKISEEEVRHVAALSKLSFSESETTEFATTLSKIVDMVELLNEVDTTGIAITTTMADKKNIMRADIAEAGVDRKFLFQNVPEKENHFIKVPAILDDGGDA.

Belongs to the GatC family. As to quaternary structure, heterotrimer of A, B and C subunits.

It carries out the reaction L-glutamyl-tRNA(Gln) + L-glutamine + ATP + H2O = L-glutaminyl-tRNA(Gln) + L-glutamate + ADP + phosphate + H(+). It catalyses the reaction L-aspartyl-tRNA(Asn) + L-glutamine + ATP + H2O = L-asparaginyl-tRNA(Asn) + L-glutamate + ADP + phosphate + 2 H(+). Functionally, allows the formation of correctly charged Asn-tRNA(Asn) or Gln-tRNA(Gln) through the transamidation of misacylated Asp-tRNA(Asn) or Glu-tRNA(Gln) in organisms which lack either or both of asparaginyl-tRNA or glutaminyl-tRNA synthetases. The reaction takes place in the presence of glutamine and ATP through an activated phospho-Asp-tRNA(Asn) or phospho-Glu-tRNA(Gln). The protein is Aspartyl/glutamyl-tRNA(Asn/Gln) amidotransferase subunit C of Streptococcus equi subsp. zooepidemicus (strain MGCS10565).